Reading from the N-terminus, the 432-residue chain is Glutamyl-tRNA reductase (432 aa).

Substrate contacts are provided by residues 55 to 58, Ser-114, 119 to 121, and Gln-125; these read TCNR and ETQ. The active-site Nucleophile is the Cys-56. 194–199 contributes to the NADP(+) binding site; the sequence is GAGEMI.

Belongs to the glutamyl-tRNA reductase family. As to quaternary structure, homodimer.

The enzyme catalyses (S)-4-amino-5-oxopentanoate + tRNA(Glu) + NADP(+) = L-glutamyl-tRNA(Glu) + NADPH + H(+). It participates in porphyrin-containing compound metabolism; protoporphyrin-IX biosynthesis; 5-aminolevulinate from L-glutamyl-tRNA(Glu): step 1/2. Functionally, catalyzes the NADPH-dependent reduction of glutamyl-tRNA(Glu) to glutamate 1-semialdehyde (GSA). In Burkholderia cenocepacia (strain ATCC BAA-245 / DSM 16553 / LMG 16656 / NCTC 13227 / J2315 / CF5610) (Burkholderia cepacia (strain J2315)), this protein is Glutamyl-tRNA reductase.